Here is a 196-residue protein sequence, read N- to C-terminus: Large ribosomal subunit protein bL20 (196 aa).

Belongs to the bacterial ribosomal protein bL20 family.

Its function is as follows. Binds directly to 23S ribosomal RNA and is necessary for the in vitro assembly process of the 50S ribosomal subunit. It is not involved in the protein synthesizing functions of that subunit. The polypeptide is Large ribosomal subunit protein bL20 (rplT) (Oenococcus oeni (strain ATCC BAA-331 / PSU-1)).